Here is a 5412-residue protein sequence, read N- to C-terminus: Mucin-4 (5412 aa).

A signal peptide spans 1–28 (MKGARWRRVPWVSLSCLCLCLLPHVVPG). Disordered stretches follow at residues 40–87 (TAAP…TTSK) and 142–249 (TSTD…ATSS). The segment at 43-4241 (PVTSTGSTTA…SVSTGHATPL (4199 aa)) is variable number of tandem repeats (VNTR). Residues 142–163 (TSTDSTLGNTEETSTAGTESST) are compositionally biased toward low complexity. 2 O-linked (GalNAc...) threonine glycosylation sites follow: threonine 154 and threonine 156. Over residues 164-199 (PVTSAVSITAGQEGQSRTTSWRTSIQDTSASSQNHW) the composition is skewed to polar residues. Over residues 200-223 (TRSTQTTRESQTSTLTHRTTSTPS) the composition is skewed to low complexity. Polar residues predominate over residues 224–249 (FSPSVHNVTGTVSQKTSPSGETATSS). N-linked (GlcNAc...) asparagine glycosylation occurs at asparagine 230. An O-linked (GalNAc...) threonine glycan is attached at threonine 234. A glycan (N-linked (GlcNAc...) asparagine) is linked at asparagine 255. 3 stretches are compositionally biased toward polar residues: residues 267–285 (TTSTGSTLGNPGETSSVPV), 306–328 (SPATFSRTSTQDTTAFSKNHQTQ), and 358–367 (GFNPSGTVSQ). Disordered regions lie at residues 267-286 (TTSTGSTLGNPGETSSVPVT), 303-328 (EGQSPATFSRTSTQDTTAFSKNHQTQ), 353-383 (LSSPSGFNPSGTVSQETFPSGETTTSSPSSV), 438-473 (LSPSSLPPKISTAFHTQQSEGAETTGRPHERSSFSP), 488-580 (WPSS…ALLS), 592-853 (TATS…ASAS), 868-963 (VPGT…SGSG), 983-1864 (SSAS…DASS), 1878-2078 (ASSV…TGHA), 2111-2220 (TALH…ASTG), 2232-2814 (SAST…TGHA), 2837-3306 (IPSS…SSVS), 3320-3580 (SAST…VSTG), 3592-3644 (SVST…VSTG), 3656-3756 (SVST…ASTG), and 3769-4223 (VSTG…GHAT). Threonine 364, threonine 369, and threonine 376 each carry an O-linked (GalNAc...) threonine glycan. Over residues 368–383 (ETFPSGETTTSSPSSV) the composition is skewed to low complexity. 3 stretches are compositionally biased toward polar residues: residues 450–459 (AFHTQQSEGA), 488–526 (WPSSFSSKGHTTWSQTELPSTSTGAATRLVTGNPSTGTA), and 546–557 (TTYSSHSTTLPK). Composition is skewed to low complexity over residues 558–577 (TTGAGAQTQWTQETGTTGEA) and 615–627 (STNHSTIHSTSTS). Asparagine 617 is a glycosylation site (N-linked (GlcNAc...) asparagine). Residues threonine 620, threonine 666, and threonine 688 are each glycosylated (O-linked (GalNAc...) threonine). Residues 628-677 (PQESPAVSQRGHTQAPQTTQESQTTRSVSPMTDTKTVTTPGSSFTASGHS) are compositionally biased toward polar residues. Positions 705 to 717 (TTQAPTTALQAAP) are enriched in low complexity. Polar residues predominate over residues 729–746 (GTSLSKTGALTLANSVVS). O-linked (GalNAc...) threonine glycosylation is present at threonine 747. Over residues 756–771 (TSASASTSPDTAAAMT) the composition is skewed to low complexity. Polar residues predominate over residues 772–789 (HTHQAESTEASGQTQTSE). Residues 790-828 (PASSGSRTTSAGTATPSSSGASGTTPSGSEGISTSGETT) are compositionally biased toward low complexity. Threonine 797, threonine 798, threonine 802, threonine 804, threonine 813, and threonine 814 each carry an O-linked (GalNAc...) threonine glycan. Positions 829-852 (RFSSNPSRDSHTTQSTTELLSASA) are enriched in polar residues. O-linked (GalNAc...) threonine glycans are attached at residues threonine 881, threonine 886, and threonine 892. Positions 885 to 903 (PTGQSSPTSPSASPQETAA) are enriched in low complexity. Positions 907-928 (MAQTQRTRTSRGSDTISLASQA) are enriched in polar residues. Residues 929-950 (TDTFSTVPPTPPSITSTGLTSP) are compositionally biased toward low complexity. Residues threonine 931, threonine 934, threonine 938, threonine 943, threonine 945, threonine 948, threonine 952, threonine 954, threonine 1003, threonine 1007, threonine 1012, threonine 1019, threonine 1022, threonine 1023, threonine 1028, threonine 1030, threonine 1035, threonine 1039, threonine 1044, threonine 1051, threonine 1055, threonine 1060, threonine 1062, threonine 1067, threonine 1071, threonine 1076, threonine 1083, threonine 1086, threonine 1087, threonine 1092, threonine 1094, threonine 1099, threonine 1103, threonine 1108, threonine 1110, threonine 1115, threonine 1118, threonine 1119, threonine 1124, threonine 1126, threonine 1131, threonine 1135, threonine 1172, threonine 1179, threonine 1182, threonine 1183, threonine 1188, threonine 1195, threonine 1199, threonine 1204, threonine 1236, threonine 1243, threonine 1246, and threonine 1247 are each glycosylated (O-linked (GalNAc...) threonine). The segment covering 951 to 963 (QTETHTLSPSGSG) has biased composition (polar residues). Residues 1007 to 1024 (TPLPVTSPSSVSTGHTTP) are compositionally biased toward low complexity. The segment covering 1028 to 1054 (TDTSSESTGHVTPLPVTSFSSASTGDS) has biased composition (polar residues). A compositionally biased stretch (polar residues) spans 1060-1086 (TDTSSASTGHVTPLPVTSLSSASTGDT). Over residues 1092-1118 (TDTSSASTGHATSLPVTDTSSVSTGHT) the composition is skewed to polar residues. 2 stretches are compositionally biased toward polar residues: residues 1124-1150 (TDTSSASTGHATSLPVTDTSSVSTGHT) and 1157-1197 (DASS…STGH). Polar residues-rich tracts occupy residues 1204 to 1213 (TDTSSASTGH) and 1221 to 1246 (DASSVSTDHATSLPVTIPSAASTGHT). The segment covering 1252–1262 (TDTSSASTGQA) has biased composition (polar residues). Residues 1263-1279 (TSLLVTDTSSVSTGDTT) show a composition bias toward low complexity. 17 O-linked (GalNAc...) threonine glycosylation sites follow: threonine 1278, threonine 1279, threonine 1284, threonine 1286, threonine 1291, threonine 1295, threonine 1300, threonine 1307, threonine 1311, threonine 1316, threonine 1323, threonine 1326, threonine 1332, threonine 1339, threonine 1342, threonine 1343, and threonine 1348. Polar residues predominate over residues 1281 to 1325 (LPVTSTSSASTGHVTPLHVTSPSSASTGHATPLPVTSLSSASTGD). Polar residues predominate over residues 1332–1342 (TSPSSASTGDT). Polar residues-rich tracts occupy residues 1349–1358 (DASSVSTGHT) and 1365–1405 (DASS…STGH). O-linked (GalNAc...) threonine glycosylation is found at threonine 1380, threonine 1387, threonine 1390, threonine 1391, threonine 1396, threonine 1403, threonine 1407, threonine 1412, threonine 1444, threonine 1451, threonine 1454, and threonine 1455. Polar residues-rich tracts occupy residues 1412 to 1421 (TDTSSASTGH) and 1429 to 1454 (DASSVSTDHATSLPVTIPSAASTGHT). Residues 1460–1470 (TDTSSASTGQA) are compositionally biased toward polar residues. The span at 1471–1487 (TSLLVTDTSSVSTGDTT) shows a compositional bias: low complexity. O-linked (GalNAc...) threonine glycosylation is found at threonine 1486, threonine 1487, threonine 1492, threonine 1494, threonine 1499, threonine 1503, threonine 1508, threonine 1515, threonine 1519, threonine 1524, threonine 1531, threonine 1534, threonine 1540, threonine 1547, threonine 1550, threonine 1551, threonine 1556, threonine 1563, threonine 1566, threonine 1567, threonine 1572, threonine 1579, threonine 1582, threonine 1583, threonine 1588, threonine 1590, threonine 1598, threonine 1599, threonine 1604, threonine 1611, threonine 1614, threonine 1615, threonine 1620, threonine 1622, threonine 1627, and threonine 1630. The segment covering 1489-1533 (LPVTSTSSASTGHVTPLHVTSPSSASTGHATPLPVTSLSSASTGD) has biased composition (polar residues). A compositionally biased stretch (polar residues) spans 1540–1550 (TSPSSASTGDT). The span at 1557 to 1582 (DASSVSTGHTTPLPVTSPSSASTGHT) shows a compositional bias: polar residues. Residues 1588 to 1614 (TDTSSASKGDTTPLPVTSPSSASTGHT) are compositionally biased toward polar residues. Positions 1620 to 1631 (TDTSSASTGDTT) are enriched in low complexity. Positions 1633–1661 (LPVTNASSLSTGHATPLHVTSPSSASTGH) are enriched in polar residues. Asparagine 1637 carries an N-linked (GlcNAc...) asparagine glycan. 24 O-linked (GalNAc...) threonine glycosylation sites follow: threonine 1659, threonine 1663, threonine 1668, threonine 1670, threonine 1675, threonine 1679, threonine 1716, threonine 1723, threonine 1726, threonine 1727, threonine 1732, threonine 1764, threonine 1766, threonine 1812, threonine 1819, threonine 1822, threonine 1823, threonine 1828, threonine 1835, threonine 1838, threonine 1839, threonine 1844, threonine 1854, and threonine 1855. Residues 1668–1679 (TSTSSASTGHAT) show a composition bias toward low complexity. 3 stretches are compositionally biased toward polar residues: residues 1701-1741 (DVSS…STGH), 1749-1773 (DASSASTGQATPLPVTDTSSVSTAH), and 1812-1822 (TSPSSASTGDT). Residues 1828 to 1840 (TDASSASTGDTTS) show a composition bias toward low complexity. Composition is skewed to polar residues over residues 1841–1864 (LPVTIPSSASSGHTTSLPVTDASS), 1892–1902 (TDTNSASTGDT), and 1909–1950 (DASS…SGHT). O-linked (GalNAc...) threonine glycosylation is found at threonine 1931, threonine 1934, threonine 1935, threonine 1940, threonine 1950, threonine 1951, threonine 1956, threonine 1963, threonine 1995, threonine 1999, threonine 2004, threonine 2006, threonine 2015, threonine 2020, threonine 2027, threonine 2030, threonine 2031, threonine 2036, threonine 2038, threonine 2047, threonine 2052, threonine 2062, threonine 2063, threonine 2132, threonine 2137, threonine 2139, threonine 2142, threonine 2143, threonine 2148, threonine 2150, threonine 2155, threonine 2159, threonine 2164, threonine 2180, threonine 2182, threonine 2187, threonine 2191, threonine 2196, threonine 2198, threonine 2203, threonine 2207, threonine 2244, threonine 2254, and threonine 2255. Positions 1957–1981 (DASSVPTGHATSLPVTDASSVSTGH) are enriched in polar residues. Positions 2004–2030 (TDTSSVSTGQATPLPVTSLSSASTGDT) are enriched in polar residues. Over residues 2036–2077 (TDTSSASTGQDTPLPVTSLSSVSTGDTTPLPVTNPSSASTGH) the composition is skewed to polar residues. Residues 2125-2146 (DTTPLPVTSPSSTSTGDTTPLP) show a composition bias toward low complexity. Residues 2148 to 2189 (TETSSVSTGHATSLPVTDTSSASTGHATSLPVTDTSSASTGH) are compositionally biased toward polar residues. Polar residues-rich tracts occupy residues 2196–2219 (TDTSSASTGQATPLPVTSPSSAST) and 2232–2254 (SASTGQATPLPVTSLSSASTGDT). Residues 2261 to 2270 (DASSVSTGHA) are compositionally biased toward polar residues. Over residues 2271–2283 (TSLPVTSLSSVST) the composition is skewed to low complexity. O-linked (GalNAc...) threonine glycosylation is found at threonine 2283, threonine 2286, threonine 2287, threonine 2292, threonine 2299, threonine 2303, threonine 2308, threonine 2324, threonine 2331, threonine 2334, threonine 2335, threonine 2340, threonine 2347, threonine 2351, threonine 2356, threonine 2363, threonine 2366, threonine 2367, threonine 2372, threonine 2382, threonine 2383, threonine 2388, threonine 2395, threonine 2398, threonine 2399, and threonine 2406. Polar residues predominate over residues 2284 to 2301 (GDTTPLPVTSPSSASTGH). Positions 2309–2349 (DASSASTGHATPLPVTSLSSASTGDTTPLPVTSPSSASTGH) are enriched in polar residues. The segment covering 2366–2399 (TTPLPVTSSSSASSGHTTPLPVTDASSASTGDTT) has biased composition (low complexity). Polar residues-rich tracts occupy residues 2404-2413 (TDTSSASTGH) and 2421-2445 (GLSSASTGDTTRLPVTNVSSASTGH). The N-linked (GlcNAc...) asparagine glycan is linked to asparagine 2437. Residues threonine 2452, threonine 2454, threonine 2459, threonine 2462, threonine 2463, threonine 2468, threonine 2500, threonine 2507, threonine 2510, threonine 2511, threonine 2516, threonine 2518, threonine 2523, and threonine 2526 are each glycosylated (O-linked (GalNAc...) threonine). Residues 2452–2471 (TSTSSASTGDTTPLPGTDTS) are compositionally biased toward low complexity. Over residues 2485–2510 (DASSVSTGDTTRLPVTSPSSASTGHT) the composition is skewed to polar residues. A compositionally biased stretch (polar residues) spans 2517–2573 (DTPSASTGDTTPLPVTNASSLSTRHATSLHVTSPSSASTGHATSLPVTDTSAASTGH). An N-linked (GlcNAc...) asparagine glycan is attached at asparagine 2533. O-linked (GalNAc...) threonine glycans are attached at residues threonine 2564, threonine 2566, threonine 2571, threonine 2575, threonine 2580, threonine 2582, threonine 2587, threonine 2590, threonine 2591, threonine 2596, threonine 2598, threonine 2619, threonine 2622, threonine 2623, threonine 2628, threonine 2660, threonine 2667, threonine 2670, threonine 2671, threonine 2676, threonine 2683, threonine 2687, threonine 2692, and threonine 2694. The span at 2580–2591 (TSTSSASTGDTT) shows a compositional bias: low complexity. Composition is skewed to polar residues over residues 2597 to 2637 (DTYS…STGH) and 2645 to 2691 (DASS…SLPV). A compositionally biased stretch (low complexity) spans 2692 to 2704 (TDTSSASTGDTTS). A compositionally biased stretch (polar residues) spans 2705–2723 (LPVTDTSSAYTGDTTSLPV). Low complexity predominate over residues 2724–2735 (TDTSSSSTGDTT). Threonine 2740, threonine 2742, threonine 2750, threonine 2751, threonine 2756, threonine 2758, threonine 2763, and threonine 2767 each carry an O-linked (GalNAc...) threonine glycan. Positions 2740–2750 (TETSSVSTGDT) are enriched in polar residues. Residues 2756 to 2798 (TDTSSASTGHATPLPVTNTSSVSTGHATPLHVTSPSSASTGHT) are compositionally biased toward polar residues. Asparagine 2773 carries N-linked (GlcNAc...) asparagine glycosylation. 7 O-linked (GalNAc...) threonine glycosylation sites follow: threonine 2779, threonine 2783, threonine 2788, threonine 2795, threonine 2798, threonine 2799, and threonine 2804. 2 stretches are compositionally biased toward polar residues: residues 2805-2814 (DASSVSTGHA) and 2837-2846 (IPSSASSGHT). O-linked (GalNAc...) threonine glycans are attached at residues threonine 2846, threonine 2847, and threonine 2852. The segment covering 2853–2877 (DASSVSTGHATSLPVTDASSVSTGH) has biased composition (polar residues). Positions 2895–2907 (TPLPLTSLSSVST) are enriched in low complexity. O-linked (GalNAc...) threonine glycans are attached at residues threonine 2910, threonine 2911, threonine 2916, threonine 2918, threonine 2923, threonine 2927, threonine 2932, threonine 2939, threonine 2942, threonine 2943, threonine 2948, threonine 2950, threonine 2955, threonine 2959, threonine 2966, threonine 2971, and threonine 2975. The segment covering 2916 to 2942 (TDTSSASTGQATPLPVTSLSSVSTGDT) has biased composition (polar residues). The segment covering 2948-2973 (TDTSSASTGHATSLPVTDTSSASTGH) has biased composition (polar residues). Composition is skewed to polar residues over residues 2980–2989 (TDTSSASTGH) and 3009–3037 (LPVTDTSSISTGHATPLHVTSPSSASTGH). 4 O-linked (GalNAc...) threonine glycosylation sites follow: threonine 3023, threonine 3028, threonine 3035, and threonine 3039. Polar residues predominate over residues 3044–3069 (TDTSSASTGHANPLHVTSPSSASTGH). 40 O-linked (GalNAc...) threonine glycosylation sites follow: threonine 3071, threonine 3076, threonine 3078, threonine 3083, threonine 3087, threonine 3092, threonine 3099, threonine 3102, threonine 3103, threonine 3108, threonine 3115, threonine 3118, threonine 3119, threonine 3124, threonine 3126, threonine 3131, threonine 3135, threonine 3140, threonine 3142, threonine 3147, threonine 3150, threonine 3151, threonine 3156, threonine 3158, threonine 3163, threonine 3167, threonine 3172, threonine 3179, threonine 3182, threonine 3183, threonine 3188, threonine 3220, threonine 3227, threonine 3230, threonine 3231, threonine 3236, threonine 3243, threonine 3247, threonine 3252, and threonine 3254. Residues 3076-3118 (TDTSSASTGHATPLPVTSLSSVSTGDTTPLPVTSPSSASTGHT) are compositionally biased toward polar residues. The span at 3124-3134 (TDTSSASTGQA) shows a compositional bias: polar residues. The span at 3140–3151 (TSTSSASTGDTT) shows a compositional bias: low complexity. Polar residues-rich tracts occupy residues 3156–3197 (TDTS…STGH) and 3205–3251 (DASS…SLPV). Low complexity predominate over residues 3252–3264 (TDTSSASTGDTTS). Residues 3265–3283 (LPVTDTSSAYTGDTTSLPV) are compositionally biased toward polar residues. Positions 3284–3295 (TDTSSSSTGDTT) are enriched in low complexity. 9 O-linked (GalNAc...) threonine glycosylation sites follow: threonine 3294, threonine 3332, threonine 3339, threonine 3342, threonine 3343, threonine 3348, threonine 3350, threonine 3355, and threonine 3359. Residues 3320-3337 (SASTGHATPLHVTSPSSA) are compositionally biased toward polar residues. Over residues 3338 to 3356 (STGDTTPVPVTDTSSVSTG) the composition is skewed to low complexity. Polar residues-rich tracts occupy residues 3365-3374 (GLSSASTGDT) and 3381-3405 (DISSASTGQATPLPVTNTSSVSTGD). Asparagine 3397 is a glycosylation site (N-linked (GlcNAc...) asparagine). 11 O-linked (GalNAc...) threonine glycosylation sites follow: threonine 3398, threonine 3403, threonine 3406, threonine 3412, threonine 3419, threonine 3423, threonine 3428, threonine 3430, threonine 3435, threonine 3439, and threonine 3444. Over residues 3412–3421 (TSPSSASTGH) the composition is skewed to polar residues. The span at 3428-3471 (TSTSSASTGHATPVPVTSTSSASTGHTTPLPVTDTSSASTGDTT) shows a compositional bias: low complexity. A glycan (O-linked (GalNAc...) serine) is linked at serine 3445. O-linked (GalNAc...) threonine glycans are attached at residues threonine 3446, threonine 3451, threonine 3454, threonine 3455, threonine 3460, threonine 3462, threonine 3467, threonine 3470, threonine 3471, threonine 3476, threonine 3483, threonine 3486, threonine 3487, threonine 3492, threonine 3499, threonine 3502, threonine 3504, threonine 3508, threonine 3515, threonine 3519, threonine 3524, threonine 3526, threonine 3531, threonine 3535, threonine 3540, threonine 3547, threonine 3550, threonine 3551, threonine 3556, threonine 3567, threonine 3614, threonine 3615, threonine 3622, threonine 3678, threonine 3679, threonine 3686, threonine 3691, threonine 3695, threonine 3700, threonine 3710, threonine 3711, threonine 3716, threonine 3718, threonine 3723, threonine 3727, threonine 3732, threonine 3739, threonine 3743, threonine 3748, threonine 3780, threonine 3787, threonine 3790, threonine 3791, threonine 3796, threonine 3798, threonine 3803, threonine 3807, threonine 3812, threonine 3822, threonine 3823, threonine 3828, threonine 3835, threonine 3839, threonine 3844, threonine 3851, threonine 3854, threonine 3860, threonine 3867, threonine 3871, threonine 3876, threonine 3883, threonine 3886, threonine 3887, threonine 3892, threonine 3894, threonine 3899, threonine 3903, threonine 3935, threonine 3940, threonine 3942, threonine 3947, threonine 3950, threonine 3951, threonine 3956, threonine 3958, threonine 3963, threonine 3967, threonine 3972, threonine 3979, threonine 3983, threonine 3988, threonine 3990, threonine 3995, threonine 3999, threonine 4004, threonine 4006, threonine 4011, threonine 4015, and threonine 4020. The segment covering 3473 to 3486 (LPVTSPSSASTGHT) has biased composition (polar residues). The segment covering 3493–3517 (IPSSASTGDTSTLPVTGASSASTGH) has biased composition (polar residues). Residues 3524–3550 (TDTSSVSTGHATPLPVTSLSSVSTGDT) show a composition bias toward polar residues. Over residues 3557-3580 (DASSASTGQATPLPVTSLSSVSTG) the composition is skewed to polar residues. Low complexity predominate over residues 3604 to 3615 (TDTSSASTGDTT). Over residues 3620–3644 (TDTSSASTGQATPLPVTSLSSVSTG) the composition is skewed to polar residues. A compositionally biased stretch (low complexity) spans 3668–3679 (TDTSSASTGDTT). The segment covering 3684–3694 (TDTSSASTGQA) has biased composition (polar residues). Over residues 3710–3728 (TTPLPVTSTSSVSTGHVTP) the composition is skewed to low complexity. Polar residues predominate over residues 3730-3741 (HVTSPSSASTGH). Residues 3780–3791 (TDASSASTGDTT) are compositionally biased toward low complexity. The span at 3796 to 3822 (TDTSSASTGQATPLPVTSLSSVSTGDT) shows a compositional bias: polar residues. Residues 3860–3869 (TSPSSASTGH) are compositionally biased toward polar residues. Over residues 3877 to 3886 (GLSSASTGDT) the composition is skewed to polar residues. Over residues 3892-3901 (TDTSSASTRH) the composition is skewed to polar residues. Residues 3940 to 3951 (TSTSSASTGDTT) show a composition bias toward low complexity. Positions 3956–3981 (TDTSSVSTGHATSLPVTSRSSASTGH) are enriched in polar residues. Polar residues predominate over residues 3988-3997 (TDTSSVSTGH). A compositionally biased stretch (low complexity) spans 3999–4011 (TPLPVTSTSSVST). Positions 4018-4029 (PVTSPSSASTGH) are enriched in polar residues. Residues serine 4021, serine 4023, serine 4024, and serine 4026 are each glycosylated (O-linked (GalNAc...) serine). Residues threonine 4027, threonine 4031, and threonine 4036 are each glycosylated (O-linked (GalNAc...) threonine). Residues 4030 to 4047 (ATPVPVTSTSSASTGDTT) are compositionally biased toward low complexity. O-linked (GalNAc...) serine glycosylation occurs at serine 4037. O-linked (GalNAc...) threonine glycosylation is found at threonine 4038, threonine 4043, threonine 4046, and threonine 4047. Positions 4049-4093 (LPVTNASSLSTGHATPLHVTSPSSASRGDTSTLPVTDASSASTGH) are enriched in polar residues. A glycan (N-linked (GlcNAc...) asparagine) is linked at asparagine 4053. Threonine 4078 and threonine 4084 each carry an O-linked (GalNAc...) threonine glycan. The span at 4095–4107 (TPLPLTSLSSVST) shows a compositional bias: low complexity. O-linked (GalNAc...) threonine glycosylation is found at threonine 4110, threonine 4111, threonine 4116, threonine 4118, threonine 4123, threonine 4127, threonine 4132, threonine 4139, threonine 4142, threonine 4143, threonine 4148, threonine 4158, threonine 4159, threonine 4164, threonine 4171, threonine 4175, threonine 4180, threonine 4182, threonine 4187, threonine 4190, threonine 4191, threonine 4196, threonine 4198, threonine 4203, threonine 4207, threonine 4212, threonine 4214, threonine 4219, threonine 4223, and threonine 4239. A compositionally biased stretch (polar residues) spans 4116–4142 (TDTSSASTGQATPLPVTSLSSVSTGDT). Residues 4149–4173 (IPSSASSGHTTSLPVTDASSVSTGH) show a composition bias toward polar residues. Residues 4180-4191 (TSTSSASTGDTT) are compositionally biased toward low complexity. Polar residues predominate over residues 4196-4205 (TDTSSASTGH). A compositionally biased stretch (polar residues) spans 4212-4223 (TDTSSASTGHAT). Residues 4242–4254 (AVSSATSASTVSS) are compositionally biased toward low complexity. Residues 4242-4288 (AVSSATSASTVSSDSPLKMETPGMTTPSLKTDGGRRTATSPPPTTSQ) are disordered. O-linked (GalNAc...) threonine glycosylation is found at threonine 4272, threonine 4278, threonine 4280, threonine 4289, threonine 4293, and threonine 4297. Residues 4397-4552 (PFWDDADFST…GLQFYRLHRE (156 aa)) enclose the NIDO domain. The AMOP domain occupies 4553–4668 (ERPNYRLECL…YLCALYQQRR (116 aa)). Positions 4680-4880 (QPAWMFGDPH…TWQINGTGLL (201 aa)) constitute a VWFD domain. N-linked (GlcNAc...) asparagine glycosylation is found at asparagine 4715, asparagine 4768, asparagine 4787, asparagine 4796, asparagine 4831, asparagine 4852, asparagine 4875, asparagine 4902, asparagine 4928, asparagine 4946, asparagine 4982, asparagine 4997, asparagine 5045, asparagine 5052, asparagine 5100, and asparagine 5119. An EGF-like 1 domain is found at 5118–5157 (QNQSCPVNYCYNQGHCYISQTLGCQPMCTCPPAFTDSRCF). Intrachain disulfides connect cysteine 5122–cysteine 5133, cysteine 5127–cysteine 5145, and cysteine 5147–cysteine 5156. N-linked (GlcNAc...) asparagine glycans are attached at residues asparagine 5185, asparagine 5192, and asparagine 5292. The EGF-like 2 domain occupies 5321-5360 (VSPCSRGYCDHGGQCQHLPSGPRCSCVSFSIYTAWGEHCE). 3 disulfide bridges follow: cysteine 5324–cysteine 5335, cysteine 5329–cysteine 5344, and cysteine 5346–cysteine 5359. The chain crosses the membrane as a helical span at residues 5369 to 5389 (FFGIFFGALGGLLLLGVGTFV).

As to quaternary structure, a heterodimeric complex, composed of a mucin-4 alpha chain and a cysteine-rich transmembrane mucin-4 beta chain. Mucin-4 beta chain interacts with ERBB2 via the EGF-like domain 1. In nonpolarized cells, associates with ERBB2 and ERBB3. In terms of processing, proteolytically cleaved into 2 chains, mucin-4 alpha chain and mucin-4 beta chain. Highly O-glycosylated. Post-translationally, is predominantly N-glycosylated. As to expression, expressed in the thymus, thyroid, lung, trachea, esophagus, stomach, small intestine, colon, testis, prostate, ovary, uterus, placenta, and mammary and salivary glands. Expressed in carcinomas arising from some of these epithelia, such as lung cancers, squamous cell carcinomas of the upper aerodigestive tract, mammary carcinomas, biliary tract, colon, and cervix cancers. Minimally or not expressed in the normal pancreas or chronic pancreatitis, but is highly expressed in pancreatic tumors and pancreatic tumor cell lines.

It localises to the cell membrane. The protein resides in the secreted. Functionally, membrane-bound mucin, a family of highly glycosylated proteins that constitute the major component of the mucus, the slimy and viscous secretion covering epithelial surfaces. These glycoproteins play important roles in the protection of the epithelium and are implicated in epithelial renewal and differentiation. Regulates cellular behavior through both anti-adhesive effects on cell-cell and cell-extracellular matrix interactions and its ability to act as an intramembrane ligand for ERBB2. Plays an important role in proliferation and differentiation of epithelial cells by inducing specific phosphorylation of ERBB2. In polarized epithelial cells, segregates ERBB2 and other ERBB receptors and prevents ERBB2 from acting as a coreceptor. The interaction with ERBB2 leads to enhanced expression of CDKN1B. The formation of a MUC4-ERBB2-ERBB3-NRG1 complex leads to down-regulation of CDKN1B, resulting in repression of apoptosis and stimulation of proliferation. Its ability to promote tumor growth may be mainly due to repression of apoptosis as opposed to proliferation. The chain is Mucin-4 (MUC4) from Homo sapiens (Human).